The following is a 269-amino-acid chain: UPF0162 protein BUsg_167 (269 aa).

The protein belongs to the UPF0162 family.

The protein is UPF0162 protein BUsg_167 of Buchnera aphidicola subsp. Schizaphis graminum (strain Sg).